We begin with the raw amino-acid sequence, 516 residues long: Acetylcholine receptor subunit delta (516 aa).

The signal sequence occupies residues 1–21 (MEGSVLTLVLLAALVVCGSWG). Over 22–244 (LNEEERLIRH…VTFYLIIRRK (223 aa)) the chain is Extracellular. N-linked (GlcNAc...) asparagine glycosylation is found at Asn-96 and Asn-163. Cys-150 and Cys-164 form a disulfide bridge. The next 3 membrane-spanning stretches (helical) occupy residues 245 to 269 (PLFYVINILVPCVLISFMINLVFYL), 279 to 296 (MAISVLLAQSVFLLLISK), and 311 to 332 (FLLFGMVLVTMVVVICVIVLNI). At 333–470 (HFRTPSTHVL…WNRVARTVDR (138 aa)) the chain is on the cytoplasmic side. Position 389 is a phosphotyrosine; by Tyr-kinases (Tyr-389). A helical membrane pass occupies residues 471-493 (LCLFVVTPIMVVGTAWIFLQGAY).

This sequence belongs to the ligand-gated ion channel (TC 1.A.9) family. Acetylcholine receptor (TC 1.A.9.1) subfamily. Delta/CHRND sub-subfamily. As to quaternary structure, pentamer of two alpha chains, and one each of the beta, delta, and gamma (in immature muscle) or epsilon (in mature muscle) chains. The muscle heteropentamer composed of alpha-1, beta-1, delta, epsilon subunits interacts with the alpha-conotoxin ImII.

It localises to the postsynaptic cell membrane. The protein resides in the cell membrane. The enzyme catalyses K(+)(in) = K(+)(out). It carries out the reaction Na(+)(in) = Na(+)(out). In terms of biological role, after binding acetylcholine, the AChR responds by an extensive change in conformation that affects all subunits and leads to opening of an ion-conducting channel across the plasma membrane. The sequence is that of Acetylcholine receptor subunit delta (CHRND) from Bos taurus (Bovine).